The following is a 318-amino-acid chain: GTP 3',8-cyclase (318 aa).

The region spanning 4–218 is the Radical SAM core domain; it reads KHGRNIDYLR…MSRSDLIPIE (215 aa). Arg13 is a GTP binding site. Residues Cys20 and Cys24 each contribute to the [4Fe-4S] cluster site. Tyr26 is an S-adenosyl-L-methionine binding site. Cys27 serves as a coordination point for [4Fe-4S] cluster. Residue Arg62 participates in GTP binding. Gly66 provides a ligand contact to S-adenosyl-L-methionine. Thr93 provides a ligand contact to GTP. Position 117 (Ser117) interacts with S-adenosyl-L-methionine. Lys154 is a GTP binding site. Met188 serves as a coordination point for S-adenosyl-L-methionine. [4Fe-4S] cluster-binding residues include Cys248 and Cys251. A GTP-binding site is contributed by 253 to 255; sequence KIR. Cys265 is a [4Fe-4S] cluster binding site.

This sequence belongs to the radical SAM superfamily. MoaA family. As to quaternary structure, monomer and homodimer. [4Fe-4S] cluster is required as a cofactor.

The enzyme catalyses GTP + AH2 + S-adenosyl-L-methionine = (8S)-3',8-cyclo-7,8-dihydroguanosine 5'-triphosphate + 5'-deoxyadenosine + L-methionine + A + H(+). Its pathway is cofactor biosynthesis; molybdopterin biosynthesis. Functionally, catalyzes the cyclization of GTP to (8S)-3',8-cyclo-7,8-dihydroguanosine 5'-triphosphate. The chain is GTP 3',8-cyclase from Clostridium acetobutylicum (strain ATCC 824 / DSM 792 / JCM 1419 / IAM 19013 / LMG 5710 / NBRC 13948 / NRRL B-527 / VKM B-1787 / 2291 / W).